The sequence spans 388 residues: MHLHEYQAKDLLVSYDIAIPPYRVASSVEEGQQALKELAIDAGVVKVQVHAGGRGKNGGVVVAKSPSDILAAVDKLLRMRFVSNQTSGEALPVEKVLITPLVNIAAEYYLAVIMDRKNRCPAIMLSKAGGVDIEEVAQKYPDQLLTVPLTPFARLYNYQIRQIIKFMNWEGDIRKQGAQLIKKLVQCFYDNDASLLEINPLVLTQEGDLLVLDAKITIDDNALYRHPKLEVLYDPSQENVRDVLAKQIGLSYIALDGNIGCLVNGAGLAMSTLDILKIHGGSAANFLDVGGSATEQQVQEAVSLVLSDENVEVLFINIFGGIMDCSAVASGLVAVMQTRENLIPTVVRLEGTNVDLGKDIVQRSGIPCQFTDSLNEAAQLAVALSKQG.

Residues 9 to 244 (KDLLVSYDIA…PSQENVRDVL (236 aa)) enclose the ATP-grasp domain. ATP is bound by residues Lys-46, 53-55 (GRG), Val-102, and Glu-107. 2 residues coordinate Mg(2+): Asn-199 and Asp-213. Residues Asn-264 and 321–323 (GIM) contribute to the substrate site.

The protein belongs to the succinate/malate CoA ligase beta subunit family. In terms of assembly, heterotetramer of two alpha and two beta subunits. Requires Mg(2+) as cofactor.

The enzyme catalyses succinate + ATP + CoA = succinyl-CoA + ADP + phosphate. It catalyses the reaction GTP + succinate + CoA = succinyl-CoA + GDP + phosphate. Its pathway is carbohydrate metabolism; tricarboxylic acid cycle; succinate from succinyl-CoA (ligase route): step 1/1. In terms of biological role, succinyl-CoA synthetase functions in the citric acid cycle (TCA), coupling the hydrolysis of succinyl-CoA to the synthesis of either ATP or GTP and thus represents the only step of substrate-level phosphorylation in the TCA. The beta subunit provides nucleotide specificity of the enzyme and binds the substrate succinate, while the binding sites for coenzyme A and phosphate are found in the alpha subunit. The polypeptide is Succinate--CoA ligase [ADP-forming] subunit beta (Chlamydia caviae (strain ATCC VR-813 / DSM 19441 / 03DC25 / GPIC) (Chlamydophila caviae)).